The sequence spans 434 residues: Bcl-2-like protein 13 (434 aa).

The BH4 signature appears at glutamate 14–lysine 30. Serine 35 carries the post-translational modification Phosphoserine. Residues isoleucine 97–lysine 113 carry the BH3 motif. The BH1 signature appears at alanine 144–leucine 154. Residues phenylalanine 190–leucine 203 carry the BH2 motif. The segment at leucine 224 to glutamine 245 is disordered. A compositionally biased stretch (polar residues) spans serine 226–glutamine 245. The A repeat unit spans residues serine 243–leucine 253. Residues serine 256, serine 258, serine 300, serine 343, serine 347, serine 377, and serine 387 each carry the phosphoserine modification. Residues serine 258–leucine 268 form an A; approximate repeat. Residues glutamate 282–aspartate 303 are disordered. Residues arginine 363–alanine 398 are disordered. Basic and acidic residues predominate over residues glutamate 365–glycine 382. The chain crosses the membrane as a helical span at residues valine 409–leucine 429.

Belongs to the Bcl-2 family. In terms of assembly, monomer.

It localises to the mitochondrion membrane. Functionally, may promote the activation of caspase-3 and apoptosis. The chain is Bcl-2-like protein 13 (Bcl2l13) from Mus musculus (Mouse).